Reading from the N-terminus, the 234-residue chain is MKIIRVQDQIEGGKIAFTLLKDSLAKGAKTLGLATGSSPISFYQEMVKSPLDFSDLTSINLDEYVGLSVESDQSYDYFMRQNLFNGKPFKKNYLPNGLATDVEAEAKRYDQIIAEHPIDFQVLGIGRNGHIGFNEPGTSFEEETHVVDLQESTIEANSRFFTSIEDVPKQAISMGIASIMKSKMIVLLAFGQEKADAIKGMVFGPITEDLPASILQKHDHVIVIVDEAAASQLD.

Asp-62 serves as the catalytic Proton acceptor; for enolization step. The For ring-opening step role is filled by Asn-128. His-130 acts as the Proton acceptor; for ring-opening step in catalysis. Glu-135 functions as the For ring-opening step in the catalytic mechanism.

The protein belongs to the glucosamine/galactosamine-6-phosphate isomerase family. NagB subfamily.

The enzyme catalyses alpha-D-glucosamine 6-phosphate + H2O = beta-D-fructose 6-phosphate + NH4(+). It participates in amino-sugar metabolism; N-acetylneuraminate degradation; D-fructose 6-phosphate from N-acetylneuraminate: step 5/5. Its function is as follows. Catalyzes the reversible isomerization-deamination of glucosamine 6-phosphate (GlcN6P) to form fructose 6-phosphate (Fru6P) and ammonium ion. The polypeptide is Glucosamine-6-phosphate deaminase (Streptococcus pyogenes serotype M49 (strain NZ131)).